The chain runs to 415 residues: MLPTAVLLVLAVSVAARDNATCDGPCGLRFRQKLESGMRVVGGMSAEPGAWPWMVSLQIFMYHNNRRYHTCGGILLNSHWVLTAAHCFKNKKKVTDWRLIFGANEVVWGSNKPVKPPLQERFVEEIIIHEKYVSGLEINDIALIKITPPVPCGPFIGPGCLPQFKAGPPRAPQTCWVTGWGYLKEKGPRTSPTLQEARVALIDLELCNSTRWYNGRIRSTNVCAGYPRGKIDTCQGDSGGPLMCRDRAENTFVVVGITSWGVGCARAKRPGVYTSTWPYLNWIASKIGSNALQMVQLGTPPRPSTPAPPVRPPSVQTPVRPPWYFQRPPGPSQQPGSRPRPPAPPPAPPPPPPPPPPPPPPPPPPPQQVSAKPPQALSFAKRLQQLIEALKGTAFSSGRSYYETETTDLQELPAS.

A signal peptide spans 1-16 (MLPTAVLLVLAVSVAA). N-linked (GlcNAc...) asparagine glycosylation occurs at Asn-19. Intrachain disulfides connect Cys-22-Cys-152, Cys-26-Cys-160, Cys-71-Cys-87, Cys-175-Cys-244, Cys-207-Cys-223, and Cys-234-Cys-264. Residues 40–288 (VVGGMSAEPG…YLNWIASKIG (249 aa)) enclose the Peptidase S1 domain. Active-site charge relay system residues include His-86 and Asp-140. The N-linked (GlcNAc...) asparagine glycan is linked to Asn-208. The active-site Charge relay system is the Ser-238. Disordered regions lie at residues 296 to 376 (QLGT…PPQA) and 395 to 415 (FSSG…LPAS). Pro residues-rich tracts occupy residues 300–312 (PPRP…PVRP) and 328–367 (PPGP…PPPQ). Residues 339 to 415 (PRPPAPPPAP…TTDLQELPAS (77 aa)) constitute a propeptide, pro-rich. The segment covering 395–409 (FSSGRSYYETETTDL) has biased composition (polar residues).

This sequence belongs to the peptidase S1 family. In terms of assembly, heavy chain (catalytic) and a light chain linked by two disulfide bonds. Forms a heterodimer with SERPINA5.

The catalysed reaction is Preferential cleavage: Arg-|-Xaa, Lys-|-Xaa.. With respect to regulation, inhibited by SERPINA5. In terms of biological role, acrosin is the major protease of mammalian spermatozoa. It is a serine protease of trypsin-like cleavage specificity, it is synthesized in a zymogen form, proacrosin and stored in the acrosome. The polypeptide is Acrosin (ACR) (Sus scrofa (Pig)).